The primary structure comprises 209 residues: Uracil phosphoribosyltransferase (209 aa).

5-phospho-alpha-D-ribose 1-diphosphate is bound by residues Arg79, Arg104, and 131–139 (DPMLATGVS). Uracil contacts are provided by residues Ile194 and 199-201 (GDA). Position 200 (Asp200) interacts with 5-phospho-alpha-D-ribose 1-diphosphate.

Belongs to the UPRTase family. Mg(2+) is required as a cofactor.

It catalyses the reaction UMP + diphosphate = 5-phospho-alpha-D-ribose 1-diphosphate + uracil. The protein operates within pyrimidine metabolism; UMP biosynthesis via salvage pathway; UMP from uracil: step 1/1. Allosterically activated by GTP. Functionally, catalyzes the conversion of uracil and 5-phospho-alpha-D-ribose 1-diphosphate (PRPP) to UMP and diphosphate. The chain is Uracil phosphoribosyltransferase from Thermotoga petrophila (strain ATCC BAA-488 / DSM 13995 / JCM 10881 / RKU-1).